The primary structure comprises 130 residues: uncharacterized protein (130 aa).

A disordered region spans residues 23 to 130 (SHLRLLPTAN…GAHQLSSPSS (108 aa)). Over residues 30–45 (TANSPSGSNQPTNPNR) the composition is skewed to polar residues.

This is an uncharacterized protein from Homo sapiens (Human).